We begin with the raw amino-acid sequence, 443 residues long: Ribosomal protein uS12 methylthiotransferase RimO (443 aa).

In terms of domain architecture, MTTase N-terminal spans 8–118 (PKVGFVSLGC…VVNAVHEVVP (111 aa)). 6 residues coordinate [4Fe-4S] cluster: cysteine 17, cysteine 53, cysteine 82, cysteine 151, cysteine 155, and cysteine 158. A Radical SAM core domain is found at 137 to 375 (LTPRHYAYLK…MAHQQAISTA (239 aa)). The region spanning 378-443 (QLRIGKEIEV…DEYDMWAEPI (66 aa)) is the TRAM domain.

Belongs to the methylthiotransferase family. RimO subfamily. Requires [4Fe-4S] cluster as cofactor.

It localises to the cytoplasm. The enzyme catalyses L-aspartate(89)-[ribosomal protein uS12]-hydrogen + (sulfur carrier)-SH + AH2 + 2 S-adenosyl-L-methionine = 3-methylsulfanyl-L-aspartate(89)-[ribosomal protein uS12]-hydrogen + (sulfur carrier)-H + 5'-deoxyadenosine + L-methionine + A + S-adenosyl-L-homocysteine + 2 H(+). Functionally, catalyzes the methylthiolation of an aspartic acid residue of ribosomal protein uS12. This chain is Ribosomal protein uS12 methylthiotransferase RimO, found in Pseudomonas putida (strain GB-1).